Here is a 251-residue protein sequence, read N- to C-terminus: Eukaryotic translation initiation factor 4E-3 (251 aa).

The tract at residues 200–251 is disordered; it reads DSSARTSSTVKPRICLPAKDPAPVKEKGPAATTSPSNPGTEATGTSPATPTP. Residues 230–251 show a composition bias toward polar residues; it reads ATTSPSNPGTEATGTSPATPTP.

Belongs to the eukaryotic initiation factor 4E family. As to quaternary structure, eIF4F is a multi-subunit complex, the composition of which varies with external and internal environmental conditions. It is composed of at least eIF4A, eIF4E and eIF4G. eIF4E is also known to interact with other partners. Interacts with mxt. Component of the pid-1 variant of the PETISCO complex (also called the pid-3, erh-2, tofu-6, and ife-3 small RNA complex) containing at least pid-1, tofu-6, ife-3, pid-3, and erh-2, which is required for the biogenesis of a class of 21 nucleotide PIWI-interacting RNAs (piRNAs) that possess a uracil residue at the 5'-end (also called 21U-RNAs). Component of the tost-1 variant of the PETISCO complex (also called the pid-3, erh-2, tofu-6, and ife-3 small RNA complex) containing at least tost-1, tofu-6, ife-3, pid-3, and erh-2, which plays an essential role in embryogenesis. Within the pid-1 and tost-1 variants of the PETISCO complexes interacts with tofu-6 (via C-terminus). In contrast to the pid-1 variant of the PETISCO complex, the tost-1 variant of the PETISCO complex plays a minor role in the biogenesis of 21U-RNAs. In terms of tissue distribution, highly expressed in the germline (at protein level).

It is found in the cytoplasmic granule. It localises to the cytoplasm. The protein localises to the perinuclear region. In terms of biological role, recognizes and binds the 7-methylguanosine-containing mRNA cap during an early step in the initiation of protein synthesis and facilitates ribosome binding by inducing the unwinding of the mRNAs secondary structures. All 5 eIF4E proteins bind monomethyl cap structures. Only ife-1, ife-2 and ife-5 bind trimethyl cap structures which result from trans-splicing. Translation of trimethyl cap structure mRNAs may be regulated by intracellular redox state; disulfide bonds change the width and depth of the cap-binding cavity determining selectivity to mRNA caps. Ife-3 is essential for viability. Component of the pid-1 and tost-1 variants of the PETISCO complexes, which have roles in the biogenesis of a class of 21 nucleotide PIWI-interacting RNAs (piRNAs) that possess a uracil residue at the 5'-end (also called 21U-RNAs) and embryogenesis, respectively. Within the pid-1 variant of the PETISCO complex binds to capped 21U-RNA precursor molecules, possibly playing a role in the processing of the 5' end of the molecules to promote binding of other complex components such as pid-3. However, it is not essential for the biogenesis of 21U-RNAs by itself. Within the tost-1 variant of the PETISCO complex binds to splice leader SL1 RNA fragments to possibly play a role in their processing. The protein is Eukaryotic translation initiation factor 4E-3 of Caenorhabditis elegans.